A 193-amino-acid chain; its full sequence is Pyridoxal 5'-phosphate synthase subunit PdxT (193 aa).

50–52 (GES) contributes to the L-glutamine binding site. Residue Cys-82 is the Nucleophile of the active site. Residues Arg-109 and 136-137 (IR) contribute to the L-glutamine site. Catalysis depends on charge relay system residues His-172 and Glu-174.

It belongs to the glutaminase PdxT/SNO family. As to quaternary structure, in the presence of PdxS, forms a dodecamer of heterodimers. Only shows activity in the heterodimer.

It carries out the reaction aldehydo-D-ribose 5-phosphate + D-glyceraldehyde 3-phosphate + L-glutamine = pyridoxal 5'-phosphate + L-glutamate + phosphate + 3 H2O + H(+). The enzyme catalyses L-glutamine + H2O = L-glutamate + NH4(+). The protein operates within cofactor biosynthesis; pyridoxal 5'-phosphate biosynthesis. Its function is as follows. Catalyzes the hydrolysis of glutamine to glutamate and ammonia as part of the biosynthesis of pyridoxal 5'-phosphate. The resulting ammonia molecule is channeled to the active site of PdxS. In Streptococcus pneumoniae serotype 19F (strain G54), this protein is Pyridoxal 5'-phosphate synthase subunit PdxT.